The sequence spans 171 residues: Vimentin-type intermediate filament-associated coiled-coil protein (171 aa).

The stretch at 7–98 forms a coiled coil; it reads LQIREANAHL…QRDQMIQELQ (92 aa). The disordered stretch occupies residues 126 to 171; the sequence is ELGPLPSSHSHGAQLLPDGPGPPLGNSMREEEGQDDQQPAVFGTTV.

As to expression, expressed in brain, heart, kidney, liver, lung, skeletal muscle, spleen and testis. Within the kidney expression is pronounced within glomeruli.

It localises to the cytoplasm. This chain is Vimentin-type intermediate filament-associated coiled-coil protein (Vmac), found in Rattus norvegicus (Rat).